The chain runs to 133 residues: Small ribosomal subunit protein eS17 (133 aa).

The protein belongs to the eukaryotic ribosomal protein eS17 family.

The chain is Small ribosomal subunit protein eS17 (RpS17) from Spodoptera frugiperda (Fall armyworm).